The sequence spans 358 residues: Alanine racemase (358 aa).

K35 serves as the catalytic Proton acceptor; specific for D-alanine. N6-(pyridoxal phosphate)lysine is present on K35. Substrate is bound at residue R130. The active-site Proton acceptor; specific for L-alanine is the Y255. M303 lines the substrate pocket.

This sequence belongs to the alanine racemase family. It depends on pyridoxal 5'-phosphate as a cofactor.

It carries out the reaction L-alanine = D-alanine. The protein operates within amino-acid biosynthesis; D-alanine biosynthesis; D-alanine from L-alanine: step 1/1. In terms of biological role, catalyzes the interconversion of L-alanine and D-alanine. May also act on other amino acids. In Shewanella woodyi (strain ATCC 51908 / MS32), this protein is Alanine racemase (alr).